Reading from the N-terminus, the 631-residue chain is Probable potassium transport system protein Kup (631 aa).

12 helical membrane passes run 17–37 (IGLL…SPLY), 56–76 (ILGV…FKYM), 109–129 (MMMV…SMIT), 147–167 (GLDH…FLIQ), 174–194 (IGVL…ALGV), 215–235 (FFII…LALT), 256–276 (WFIL…ALVL), 288–308 (LLAP…ATII), 346–366 (IYIG…VIGF), 378–398 (VAVT…MLML), 403–423 (PLLA…FFAA), and 428–448 (IFQG…LMTT).

This sequence belongs to the HAK/KUP transporter (TC 2.A.72) family.

Its subcellular location is the cell inner membrane. The enzyme catalyses K(+)(in) + H(+)(in) = K(+)(out) + H(+)(out). Functionally, transport of potassium into the cell. Likely operates as a K(+):H(+) symporter. This Pseudomonas savastanoi pv. phaseolicola (strain 1448A / Race 6) (Pseudomonas syringae pv. phaseolicola (strain 1448A / Race 6)) protein is Probable potassium transport system protein Kup.